A 447-amino-acid polypeptide reads, in one-letter code: Glucose-6-phosphate isomerase (447 aa).

Glutamate 289 (proton donor) is an active-site residue. Catalysis depends on residues histidine 310 and lysine 424.

The protein belongs to the GPI family.

The protein resides in the cytoplasm. It catalyses the reaction alpha-D-glucose 6-phosphate = beta-D-fructose 6-phosphate. It participates in carbohydrate biosynthesis; gluconeogenesis. Its pathway is carbohydrate degradation; glycolysis; D-glyceraldehyde 3-phosphate and glycerone phosphate from D-glucose: step 2/4. Its function is as follows. Catalyzes the reversible isomerization of glucose-6-phosphate to fructose-6-phosphate. In Parabacteroides distasonis (strain ATCC 8503 / DSM 20701 / CIP 104284 / JCM 5825 / NCTC 11152), this protein is Glucose-6-phosphate isomerase.